Reading from the N-terminus, the 868-residue chain is MHEHYQPREIEAAAQLFWDEQKSFEVSEQPGKETYYCLSMFPYPSGKLHMGHVRNYTIGDVISRYQRMQGKNVLQPMGWDAFGMPAENAAMKNNVAPAKWTYENIAYMKTQLRSLGLAVDWSREVTTCKPDYYRWEQWLFTRLFEKGVIYRKNGTVNWDPIDQTVLANEQVIDGRGWRSGALIEKREIPMYYFKITAYADELLESLDELPGWPEQVKTMQRNWIGKSRGMEVQFPYDQASIGEAGTLKVFTTRPDTLMGATYVAVAAEHPLATLAAQDNPELQAFIAECKGGSVAEADMATQEKKGLPTSLFVEHPLTGEKLPVWVANYVLMHYGDGAVMAVPAHDERDFEFATKYNLPIKAVVRTSAGDETPAPWQDAYGEHGELINSGEFNGLDFPGAFDAIEVALLKKNLGQSRTQFRLRDWGISRQRYWGCPIPIIHCDSCGDVPVPQEQLPVVLPEDVVPDGAGSPLARMPEFYECSCPKCGAPAKRETDTMDTFVESSWYYARYASPHYEGGLVDPAAANHWLPVDQYIGGIEHAILHLLYARFFHKLMRDEGLVSSNEPFKNLLTQGMVIAETYYRREANGSYTWYNPADVELERDSKAKIIGAKLISDGLPVEIGGTEKMAKSKNNGVDPQSMIEQYGADTCRLFMMFASPPDMSLEWSDSGVEGAHRFLKRVWRLAQAHVSQGLPGALDIATLSDEQKAIRRAIHLAIKQASQDVGQHHKFNTAIAQVMTLMNVLEKAPQGSEQDRALLQEGLQTVALLLAPITPHISHELWGQLGQSGAIIDAGWPALDESALVQDSLQLVIQVNGKLRGQIEMPASASREEVEAAARSNENVLRFTEGLTIRKVIVVPGKLVNIVAS.

Residues 42–52 (PYPSGKLHMGH) carry the 'HIGH' region motif. The 'KMSKS' region motif lies at 627–631 (KMAKS). Position 630 (K630) interacts with ATP.

This sequence belongs to the class-I aminoacyl-tRNA synthetase family.

It localises to the cytoplasm. It carries out the reaction tRNA(Leu) + L-leucine + ATP = L-leucyl-tRNA(Leu) + AMP + diphosphate. In Pseudomonas fluorescens (strain ATCC BAA-477 / NRRL B-23932 / Pf-5), this protein is Leucine--tRNA ligase.